The primary structure comprises 154 residues: Xanthine-guanine phosphoribosyltransferase (154 aa).

5-phospho-alpha-D-ribose 1-diphosphate-binding positions include 38–39, lysine 71, and 90–98; these read RG and DDLVDTGGT. Lysine 71 lines the GMP pocket. Residue aspartate 91 coordinates Mg(2+). Aspartate 94 and isoleucine 137 together coordinate guanine. Xanthine is bound by residues aspartate 94 and isoleucine 137. GMP contacts are provided by residues 94-98 and 136-137; these read DTGGT and WI.

This sequence belongs to the purine/pyrimidine phosphoribosyltransferase family. XGPT subfamily. Homotetramer. Mg(2+) is required as a cofactor.

Its subcellular location is the cell inner membrane. The catalysed reaction is GMP + diphosphate = guanine + 5-phospho-alpha-D-ribose 1-diphosphate. The enzyme catalyses XMP + diphosphate = xanthine + 5-phospho-alpha-D-ribose 1-diphosphate. It catalyses the reaction IMP + diphosphate = hypoxanthine + 5-phospho-alpha-D-ribose 1-diphosphate. It functions in the pathway purine metabolism; GMP biosynthesis via salvage pathway; GMP from guanine: step 1/1. Its pathway is purine metabolism; XMP biosynthesis via salvage pathway; XMP from xanthine: step 1/1. Purine salvage pathway enzyme that catalyzes the transfer of the ribosyl-5-phosphate group from 5-phospho-alpha-D-ribose 1-diphosphate (PRPP) to the N9 position of the 6-oxopurines guanine and xanthine to form the corresponding ribonucleotides GMP (guanosine 5'-monophosphate) and XMP (xanthosine 5'-monophosphate), with the release of PPi. To a lesser extent, also acts on hypoxanthine. This Buchnera aphidicola subsp. Schizaphis graminum (strain Sg) protein is Xanthine-guanine phosphoribosyltransferase.